A 326-amino-acid chain; its full sequence is Putative HTH-type transcriptional regulator y4qH (326 aa).

The HTH luxR-type domain maps to 257–322; sequence AVQKIPALSL…VAAIKAISLG (66 aa). Positions 281–300 form a DNA-binding region, H-T-H motif; sequence SWDIGVIMRISENTVNFHIK.

Belongs to the autoinducer-regulated transcriptional regulatory protein family.

The sequence is that of Putative HTH-type transcriptional regulator y4qH from Sinorhizobium fredii (strain NBRC 101917 / NGR234).